The primary structure comprises 359 residues: tRNA N6-adenosine threonylcarbamoyltransferase (359 aa).

Fe cation-binding residues include His115 and His119. Substrate-binding positions include 137–141 (LVSGG), Asp170, Gly183, and Asn283. Fe cation is bound at residue Asp311. The tract at residues 328-359 (APDSLDLAPRSRWPLDEKSAPLIGTGRRGAKA) is disordered.

It belongs to the KAE1 / TsaD family. It depends on Fe(2+) as a cofactor.

Its subcellular location is the cytoplasm. It catalyses the reaction L-threonylcarbamoyladenylate + adenosine(37) in tRNA = N(6)-L-threonylcarbamoyladenosine(37) in tRNA + AMP + H(+). Required for the formation of a threonylcarbamoyl group on adenosine at position 37 (t(6)A37) in tRNAs that read codons beginning with adenine. Is involved in the transfer of the threonylcarbamoyl moiety of threonylcarbamoyl-AMP (TC-AMP) to the N6 group of A37, together with TsaE and TsaB. TsaD likely plays a direct catalytic role in this reaction. This Brucella anthropi (strain ATCC 49188 / DSM 6882 / CCUG 24695 / JCM 21032 / LMG 3331 / NBRC 15819 / NCTC 12168 / Alc 37) (Ochrobactrum anthropi) protein is tRNA N6-adenosine threonylcarbamoyltransferase.